A 261-amino-acid chain; its full sequence is MRIALGIEYFGADYYGWQRQREVNSVQQELETALSRVANHPVEIQCAGRTDAGVNATGQVIHFDTTANRQMSAWTLGINAQLPDDIAVRWAHVVDDNFHARFSATARRYRYIIYNEPLRPGILAKGVSHYYHPLNADQMNEAGQLLLGERDFTSFRAAQCQSNTPFRNIMSLSVHRAGSYVILDIQANAFLHHMVRNIMGSLLLVGTGEKPKEWIGEILDAKDRTVSGATAKAEGLYLVDVTYPLHYGLPKPPLGPLWFNA.

Catalysis depends on Asp-51, which acts as the Nucleophile. Tyr-109 contacts substrate.

The protein belongs to the tRNA pseudouridine synthase TruA family. In terms of assembly, homodimer.

The enzyme catalyses uridine(38/39/40) in tRNA = pseudouridine(38/39/40) in tRNA. Its function is as follows. Formation of pseudouridine at positions 38, 39 and 40 in the anticodon stem and loop of transfer RNAs. The sequence is that of tRNA pseudouridine synthase A from Tolumonas auensis (strain DSM 9187 / NBRC 110442 / TA 4).